Consider the following 125-residue polypeptide: Probable 4-amino-4-deoxy-L-arabinose-phosphoundecaprenol flippase subunit ArnF (125 aa).

The Cytoplasmic segment spans residues 1 to 2; that stretch reads MG. Residues 3-23 traverse the membrane as a helical segment; the sequence is VMWGLISVAIASLAQLSLGFA. Topologically, residues 24–33 are periplasmic; sequence MMRLPSIAHP. A helical membrane pass occupies residues 34-54; sequence LAFISGLGALNAATLALFAGL. The Cytoplasmic segment spans residues 55–76; sequence AGYLVSVFCWHKTLHTLALSKA. A helical transmembrane segment spans residues 77–97; it reads YALLSLSYVLVWVASMLLPGL. The Periplasmic portion of the chain corresponds to 98–100; sequence QGA. A helical transmembrane segment spans residues 101–121; the sequence is FSLKAMLGVLCIMAGVMLIFL. Over 122–125 the chain is Cytoplasmic; that stretch reads PARS.

This sequence belongs to the ArnF family. In terms of assembly, heterodimer of ArnE and ArnF.

Its subcellular location is the cell inner membrane. Its pathway is bacterial outer membrane biogenesis; lipopolysaccharide biosynthesis. In terms of biological role, translocates 4-amino-4-deoxy-L-arabinose-phosphoundecaprenol (alpha-L-Ara4N-phosphoundecaprenol) from the cytoplasmic to the periplasmic side of the inner membrane. This Salmonella agona (strain SL483) protein is Probable 4-amino-4-deoxy-L-arabinose-phosphoundecaprenol flippase subunit ArnF.